Reading from the N-terminus, the 197-residue chain is Segregation and condensation protein B (197 aa).

It belongs to the ScpB family. Homodimer. Homodimerization may be required to stabilize the binding of ScpA to the Smc head domains. Component of a cohesin-like complex composed of ScpA, ScpB and the Smc homodimer, in which ScpA and ScpB bind to the head domain of Smc. The presence of the three proteins is required for the association of the complex with DNA.

It is found in the cytoplasm. Its function is as follows. Participates in chromosomal partition during cell division. May act via the formation of a condensin-like complex containing Smc and ScpA that pull DNA away from mid-cell into both cell halves. The polypeptide is Segregation and condensation protein B (Syntrophotalea carbinolica (strain DSM 2380 / NBRC 103641 / GraBd1) (Pelobacter carbinolicus)).